The sequence spans 338 residues: Cytochrome c biogenesis protein CcsA (338 aa).

Helical transmembrane passes span phenylalanine 15–proline 35, glycine 36–leucine 56, leucine 71–tryptophan 91, tryptophan 97–leucine 117, valine 142–isoleucine 162, isoleucine 246–asparagine 266, tryptophan 273–leucine 293, and alanine 307–leucine 327.

It belongs to the CcmF/CycK/Ccl1/NrfE/CcsA family. As to quaternary structure, may interact with ccs1.

It localises to the cellular thylakoid membrane. Functionally, required during biogenesis of c-type cytochromes (cytochrome c6 and cytochrome f) at the step of heme attachment. The protein is Cytochrome c biogenesis protein CcsA of Picosynechococcus sp. (strain ATCC 27264 / PCC 7002 / PR-6) (Agmenellum quadruplicatum).